We begin with the raw amino-acid sequence, 342 residues long: Renalase (342 aa).

A signal peptide spans 1–17 (MSRVLVVGAGLTGSLCA). Residues T12, R42, and 61–62 (QY) each bind FAD.

Belongs to the renalase family. It depends on FAD as a cofactor. Expressed predominantly in kidney and testis with lower levels in liver, heart and embryo and weak expression in brain and skeletal muscle.

It localises to the secreted. The enzyme catalyses 1,2-dihydro-beta-NAD + O2 + H(+) = H2O2 + NAD(+). The catalysed reaction is 1,2-dihydro-beta-NADP + O2 + H(+) = H2O2 + NADP(+). It catalyses the reaction 1,6-dihydro-beta-NADP + O2 + H(+) = H2O2 + NADP(+). It carries out the reaction 1,6-dihydro-beta-NAD + O2 + H(+) = H2O2 + NAD(+). Its function is as follows. Catalyzes the oxidation of the less abundant 1,2-dihydro-beta-NAD(P) and 1,6-dihydro-beta-NAD(P) to form beta-NAD(P)(+). The enzyme hormone is secreted by the kidney, and circulates in blood and modulates cardiac function and systemic blood pressure. Lowers blood pressure in vivo by decreasing cardiac contractility and heart rate and preventing a compensatory increase in peripheral vascular tone, suggesting a causal link to the increased plasma catecholamine and heightened cardiovascular risk. High concentrations of catecholamines activate plasma renalase and promotes its secretion and synthesis. This Mus musculus (Mouse) protein is Renalase.